The chain runs to 285 residues: 1,4-dihydroxy-2-naphthoyl-CoA synthase (285 aa).

Substrate-binding positions include Arg45, Ala84–Gln88, Tyr97, Tyr129–Gly133, Thr155, Ser161, Tyr258, and Lys273. Gln154–Gly156 serves as a coordination point for hydrogencarbonate.

It belongs to the enoyl-CoA hydratase/isomerase family. MenB subfamily. In terms of assembly, homohexamer. Hydrogencarbonate is required as a cofactor.

The enzyme catalyses 2-succinylbenzoyl-CoA + H(+) = 1,4-dihydroxy-2-naphthoyl-CoA + H2O. It functions in the pathway quinol/quinone metabolism; 1,4-dihydroxy-2-naphthoate biosynthesis; 1,4-dihydroxy-2-naphthoate from chorismate: step 6/7. It participates in quinol/quinone metabolism; menaquinone biosynthesis. Converts o-succinylbenzoyl-CoA (OSB-CoA) to 1,4-dihydroxy-2-naphthoyl-CoA (DHNA-CoA). The sequence is that of 1,4-dihydroxy-2-naphthoyl-CoA synthase from Salmonella typhimurium (strain LT2 / SGSC1412 / ATCC 700720).